Consider the following 653-residue polypeptide: Threonine--tRNA ligase (653 aa).

The TGS domain occupies 1–61; sequence MIKITFPDGN…NEDAEVKLFK (61 aa). The catalytic stretch occupies residues 243–542; sequence DHRKIGKELE…LIEHTAGKFP (300 aa). Cys338, His389, and His519 together coordinate Zn(2+).

It belongs to the class-II aminoacyl-tRNA synthetase family. In terms of assembly, homodimer. Zn(2+) is required as a cofactor.

The protein localises to the cytoplasm. It catalyses the reaction tRNA(Thr) + L-threonine + ATP = L-threonyl-tRNA(Thr) + AMP + diphosphate + H(+). In terms of biological role, catalyzes the attachment of threonine to tRNA(Thr) in a two-step reaction: L-threonine is first activated by ATP to form Thr-AMP and then transferred to the acceptor end of tRNA(Thr). Also edits incorrectly charged L-seryl-tRNA(Thr). The sequence is that of Threonine--tRNA ligase from Porphyromonas gingivalis (strain ATCC 33277 / DSM 20709 / CIP 103683 / JCM 12257 / NCTC 11834 / 2561).